Reading from the N-terminus, the 391-residue chain is DNA-directed RNA polymerase subunit Rpo1C (391 aa).

Belongs to the RNA polymerase beta' chain family. Part of the RNA polymerase complex.

Its subcellular location is the cytoplasm. It catalyses the reaction RNA(n) + a ribonucleoside 5'-triphosphate = RNA(n+1) + diphosphate. DNA-dependent RNA polymerase (RNAP) catalyzes the transcription of DNA into RNA using the four ribonucleoside triphosphates as substrates. Forms part of the jaw domain. The chain is DNA-directed RNA polymerase subunit Rpo1C from Thermococcus onnurineus (strain NA1).